The sequence spans 162 residues: ATP synthase subunit b 1 (162 aa).

A helical transmembrane segment spans residues 3–23 (FLDATFFAFVGLVLFLALVVY).

The protein belongs to the ATPase B chain family. F-type ATPases have 2 components, F(1) - the catalytic core - and F(0) - the membrane proton channel. F(1) has five subunits: alpha(3), beta(3), gamma(1), delta(1), epsilon(1). F(0) has three main subunits: a(1), b(2) and c(10-14). The alpha and beta chains form an alternating ring which encloses part of the gamma chain. F(1) is attached to F(0) by a central stalk formed by the gamma and epsilon chains, while a peripheral stalk is formed by the delta and b chains.

It localises to the cell inner membrane. F(1)F(0) ATP synthase produces ATP from ADP in the presence of a proton or sodium gradient. F-type ATPases consist of two structural domains, F(1) containing the extramembraneous catalytic core and F(0) containing the membrane proton channel, linked together by a central stalk and a peripheral stalk. During catalysis, ATP synthesis in the catalytic domain of F(1) is coupled via a rotary mechanism of the central stalk subunits to proton translocation. Functionally, component of the F(0) channel, it forms part of the peripheral stalk, linking F(1) to F(0). This Rhizobium johnstonii (strain DSM 114642 / LMG 32736 / 3841) (Rhizobium leguminosarum bv. viciae) protein is ATP synthase subunit b 1.